Here is a 72-residue protein sequence, read N- to C-terminus: Large ribosomal subunit protein uL29 (72 aa).

Belongs to the universal ribosomal protein uL29 family.

This Prochlorococcus marinus (strain MIT 9215) protein is Large ribosomal subunit protein uL29.